A 197-amino-acid chain; its full sequence is Holliday junction branch migration complex subunit RuvA (197 aa).

The segment at Met-1 to Phe-64 is domain I. The domain II stretch occupies residues Thr-65–Asp-143. The tract at residues Leu-144–Ser-154 is flexible linker. The segment at Ser-154–Gly-197 is domain III.

This sequence belongs to the RuvA family. In terms of assembly, homotetramer. Forms an RuvA(8)-RuvB(12)-Holliday junction (HJ) complex. HJ DNA is sandwiched between 2 RuvA tetramers; dsDNA enters through RuvA and exits via RuvB. An RuvB hexamer assembles on each DNA strand where it exits the tetramer. Each RuvB hexamer is contacted by two RuvA subunits (via domain III) on 2 adjacent RuvB subunits; this complex drives branch migration. In the full resolvosome a probable DNA-RuvA(4)-RuvB(12)-RuvC(2) complex forms which resolves the HJ.

The protein localises to the cytoplasm. In terms of biological role, the RuvA-RuvB-RuvC complex processes Holliday junction (HJ) DNA during genetic recombination and DNA repair, while the RuvA-RuvB complex plays an important role in the rescue of blocked DNA replication forks via replication fork reversal (RFR). RuvA specifically binds to HJ cruciform DNA, conferring on it an open structure. The RuvB hexamer acts as an ATP-dependent pump, pulling dsDNA into and through the RuvAB complex. HJ branch migration allows RuvC to scan DNA until it finds its consensus sequence, where it cleaves and resolves the cruciform DNA. The chain is Holliday junction branch migration complex subunit RuvA from Clostridium tetani (strain Massachusetts / E88).